A 232-amino-acid polypeptide reads, in one-letter code: Ubiquinone biosynthesis O-methyltransferase (232 aa).

S-adenosyl-L-methionine-binding residues include Arg36, Gly55, Asp76, and Met120.

Belongs to the methyltransferase superfamily. UbiG/COQ3 family.

It carries out the reaction a 3-demethylubiquinol + S-adenosyl-L-methionine = a ubiquinol + S-adenosyl-L-homocysteine + H(+). It catalyses the reaction a 3-(all-trans-polyprenyl)benzene-1,2-diol + S-adenosyl-L-methionine = a 2-methoxy-6-(all-trans-polyprenyl)phenol + S-adenosyl-L-homocysteine + H(+). It functions in the pathway cofactor biosynthesis; ubiquinone biosynthesis. O-methyltransferase that catalyzes the 2 O-methylation steps in the ubiquinone biosynthetic pathway. In Burkholderia multivorans (strain ATCC 17616 / 249), this protein is Ubiquinone biosynthesis O-methyltransferase.